The primary structure comprises 917 residues: Interleukin-6 receptor subunit beta (917 aa).

The signal sequence occupies residues 1-22 (MSAPRIWLAQALLFFLTTESIG). Over 23–617 (QLLEPCGYIY…TPKFAQGEIE (595 aa)) the chain is Extracellular. The region spanning 26–120 (EPCGYIYPEF…IEQNVYGVTM (95 aa)) is the Ig-like C2-type domain. 2 disulfide bridges follow: C28-C54 and C48-C103. N43, N61, N83, and N131 each carry an N-linked (GlcNAc...) asparagine glycan. 5 consecutive Fibronectin type-III domains span residues 128–221 (KPTN…VKPT), 222–322 (PPYN…TYED), 327–417 (PPSF…IPSP), 422–515 (AYSV…LKQA), and 517–611 (PARG…TPKF). The cysteines at positions 134 and 144 are disulfide-linked. A glycan (N-linked (GlcNAc...) asparagine) is linked at N157. Cysteines 172 and 180 form a disulfide. Residue N225 is glycosylated (N-linked (GlcNAc...) asparagine). The short motif at 308 to 312 (WSDWS) is the WSXWS motif element. N-linked (GlcNAc...) asparagine glycosylation is present at N388. C456 and C464 are joined by a disulfide. N476 and N551 each carry an N-linked (GlcNAc...) asparagine glycan. The helical transmembrane segment at 618–639 (AIVVPVCLAFLLTTLLGVLFCF) threads the bilayer. The Cytoplasmic segment spans residues 640–917 (NKRDLIKKHI…TVRQGGYMPQ (278 aa)). Positions 649–657 (IWPNVPDPS) match the Box 1 motif motif. 2 disordered regions span residues 658-678 (KSHI…NSKD) and 719-754 (TEGH…TAST). A phosphoserine mark is found at S659 and S665. Residues 729-753 (SSCMSSSRPSISSNEENESAQSTAS) show a composition bias toward low complexity. Phosphoserine occurs at positions 780, 787, 827, and 837. Residues 898–917 (EEIPKSYLPQTVRQGGYMPQ) are disordered.

It belongs to the type I cytokine receptor family. Type 2 subfamily. Component of a hexamer of two molecules each of IL6, IL6R and IL6ST; associates with the complex IL6:IL6R but does not interact with IL6. Forms heterodimers composed of LIFR and IL6ST (type I OSM receptor) which are activated by LIF and OSM. Also forms heterodimers composed of OSMR and IL6ST (type II receptor) which are activated by OSM but not by LIF. Interacts with HCK. Interacts with INPP5D/SHIP1. Interacts with SRC and YES. Interacts with ARMH4; this interaction prevents IL6ST protein homodimerization and bridges ARMH4 with IL6R and STAT3 and therefore inhibits phosphorylation of STAT3 at 'Tyr-705'. Phosphorylation of Ser-780 down-regulates cell surface expression. In terms of processing, heavily N-glycosylated. Glycosylation is required for protein stability and localization in plasma membrane but not for ligand binding. As to expression, expression not restricted to IL6-responsive cells. Found in tissues such as brain, heart, thymus, spleen, kidney, lung and liver. Found in all the cell lines tested except BaF-B03. Expressed paraventricular nucleus of the hypothalamus.

It localises to the cell membrane. In terms of biological role, signal-transducing molecule. The receptor systems for IL6, LIF, OSM, CNTF, IL11, CTF1 and BSF3 can utilize IL6ST for initiating signal transmission. Binding of IL6 to IL6R induces IL6ST homodimerization and formation of a high-affinity receptor complex, which activates the intracellular JAK-MAPK and JAK-STAT3 signaling pathways. That causes phosphorylation of IL6ST tyrosine residues which in turn activates STAT3. In parallel, the IL6 signaling pathway induces the expression of two cytokine receptor signaling inhibitors, SOCS1 and SOCS3, which inhibit JAK and terminate the activity of the IL6 signaling pathway as a negative feedback loop. Also activates the yes-associated protein 1 (YAP) and NOTCH pathways to control inflammation-induced epithelial regeneration, independently of STAT3. Mediates signals which regulate immune response, hematopoiesis, pain control and bone metabolism. Has a role in embryonic development. Essential for survival of motor and sensory neurons and for differentiation of astrocytes. Required for expression of TRPA1 in nociceptive neurons. Required for the maintenance of PTH1R expression in the osteoblast lineage and for the stimulation of PTH-induced osteoblast differentiation. Required for normal trabecular bone mass and cortical bone composition. The sequence is that of Interleukin-6 receptor subunit beta from Mus musculus (Mouse).